Consider the following 627-residue polypeptide: Coiled-coil domain-containing protein 22 (627 aa).

The segment at 1 to 321 is sufficient for interaction with COMMD1; the sequence is MEEADRILIH…VADIPAASQR (321 aa). The interval 1 to 447 is sufficicient and required for interaction with CCDC93; sequence MEEADRILIH…LQDCRELESS (447 aa). The stretch at 321 to 384 forms a coiled coil; it reads RPEQDTRAAQ…SVAEQEQALR (64 aa). Residue serine 410 is modified to Phosphoserine. Positions 448-535 form a coiled coil; sequence RRLVEIQELH…NSLSGKLDRT (88 aa).

Belongs to the CCDC22 family. Component of the commander complex consisting of the CCC subcomplex and the retriever subcomplex. Component of the CCC (COMMD/CCDC22/CCDC93) subcomplex consisting of COMMD1, COMMD2, COMMD3, COMMD4, COMMD5, COMMD6, COMMD7, COMMD8, COMMD9, COMMD10, CCDC22 and CCDC93. Forms a coiled-coil heterodimer with CCDC22; this heterodimer interacts with the guanine nucleotide exchange factor DENND10; the interaction is direct. Interacts with CUL1, CUL2, CUL3, SKP1, BTRC. Interacts with SNX17 and SNX31. Interacts with CPNE1 and CPNE4.

Its subcellular location is the endosome. It is found in the cytoplasm. The protein localises to the cytoskeleton. It localises to the microtubule organizing center. The protein resides in the centrosome. Functionally, component of the commander complex that is essential for endosomal recycling of transmembrane cargos; the Commander complex is composed of composed of the CCC subcomplex and the retriever subcomplex. Component of the CCC complex, which is involved in the regulation of endosomal recycling of surface proteins, including integrins, signaling receptor and channels. Involved in regulation of NF-kappa-B signaling. Promotes ubiquitination of I-kappa-B-kinase subunit IKBKB and its subsequent proteasomal degradation leading to NF-kappa-B activation; the function may involve association with COMMD8 and a CUL1-dependent E3 ubiquitin ligase complex. May down-regulate NF-kappa-B activity via association with COMMD1 and involving a CUL2-dependent E3 ubiquitin ligase complex. Regulates the cellular localization of COMM domain-containing proteins, such as COMMD1 and COMMD10. Component of the CCC complex, which is involved in the regulation of endosomal recycling of surface proteins, including integrins, signaling receptor and channels. The CCC complex associates with SNX17, retriever and WASH complexes to prevent lysosomal degradation and promote cell surface recycling of numerous cargos such as integrins ITGA5:ITGB1. Plays a role in copper ion homeostasis. Involved in copper-dependent ATP7A trafficking between the trans-Golgi network and vesicles in the cell periphery; the function is proposed to depend on its association within the CCC complex and cooperation with the WASH complex on early endosomes. This chain is Coiled-coil domain-containing protein 22, found in Rattus norvegicus (Rat).